The primary structure comprises 253 residues: 3-deoxy-manno-octulosonate cytidylyltransferase (253 aa).

The protein belongs to the KdsB family.

The protein localises to the cytoplasm. The catalysed reaction is 3-deoxy-alpha-D-manno-oct-2-ulosonate + CTP = CMP-3-deoxy-beta-D-manno-octulosonate + diphosphate. Its pathway is nucleotide-sugar biosynthesis; CMP-3-deoxy-D-manno-octulosonate biosynthesis; CMP-3-deoxy-D-manno-octulosonate from 3-deoxy-D-manno-octulosonate and CTP: step 1/1. The protein operates within bacterial outer membrane biogenesis; lipopolysaccharide biosynthesis. Functionally, activates KDO (a required 8-carbon sugar) for incorporation into bacterial lipopolysaccharide in Gram-negative bacteria. In Neisseria meningitidis serogroup C / serotype 2a (strain ATCC 700532 / DSM 15464 / FAM18), this protein is 3-deoxy-manno-octulosonate cytidylyltransferase.